Reading from the N-terminus, the 116-residue chain is Aspartate 1-decarboxylase (116 aa).

Residue Ser25 is the Schiff-base intermediate with substrate; via pyruvic acid of the active site. A Pyruvic acid (Ser) modification is found at Ser25. Thr57 is a substrate binding site. The active-site Proton donor is the Tyr58. 73-75 (GPA) contributes to the substrate binding site.

This sequence belongs to the PanD family. As to quaternary structure, heterooctamer of four alpha and four beta subunits. Pyruvate serves as cofactor. Is synthesized initially as an inactive proenzyme, which is activated by self-cleavage at a specific serine bond to produce a beta-subunit with a hydroxyl group at its C-terminus and an alpha-subunit with a pyruvoyl group at its N-terminus.

It is found in the cytoplasm. The enzyme catalyses L-aspartate + H(+) = beta-alanine + CO2. It participates in cofactor biosynthesis; (R)-pantothenate biosynthesis; beta-alanine from L-aspartate: step 1/1. In terms of biological role, catalyzes the pyruvoyl-dependent decarboxylation of aspartate to produce beta-alanine. The polypeptide is Aspartate 1-decarboxylase (Flavobacterium psychrophilum (strain ATCC 49511 / DSM 21280 / CIP 103535 / JIP02/86)).